Consider the following 210-residue polypeptide: Na(+)-translocating NADH-quinone reductase subunit D (210 aa).

Transmembrane regions (helical) follow at residues 14–34 (PIVS…ALAV), 42–62 (LVMT…ISML), 72–92 (IIVQ…VLQA), 103–123 (VFVG…AYAM), 131–151 (FMDG…VGFV), and 178–198 (NGLL…IWII).

This sequence belongs to the NqrDE/RnfAE family. In terms of assembly, composed of six subunits; NqrA, NqrB, NqrC, NqrD, NqrE and NqrF.

The protein resides in the cell inner membrane. The catalysed reaction is a ubiquinone + n Na(+)(in) + NADH + H(+) = a ubiquinol + n Na(+)(out) + NAD(+). Its function is as follows. NQR complex catalyzes the reduction of ubiquinone-1 to ubiquinol by two successive reactions, coupled with the transport of Na(+) ions from the cytoplasm to the periplasm. NqrA to NqrE are probably involved in the second step, the conversion of ubisemiquinone to ubiquinol. The sequence is that of Na(+)-translocating NADH-quinone reductase subunit D from Shewanella woodyi (strain ATCC 51908 / MS32).